We begin with the raw amino-acid sequence, 524 residues long: Bifunctional purine biosynthesis protein PurH (524 aa).

The MGS-like domain occupies 1–145 (MIKQALLSVS…KNHRDVTVIV (145 aa)).

The protein belongs to the PurH family.

The catalysed reaction is (6R)-10-formyltetrahydrofolate + 5-amino-1-(5-phospho-beta-D-ribosyl)imidazole-4-carboxamide = 5-formamido-1-(5-phospho-D-ribosyl)imidazole-4-carboxamide + (6S)-5,6,7,8-tetrahydrofolate. It carries out the reaction IMP + H2O = 5-formamido-1-(5-phospho-D-ribosyl)imidazole-4-carboxamide. It functions in the pathway purine metabolism; IMP biosynthesis via de novo pathway; 5-formamido-1-(5-phospho-D-ribosyl)imidazole-4-carboxamide from 5-amino-1-(5-phospho-D-ribosyl)imidazole-4-carboxamide (10-formyl THF route): step 1/1. It participates in purine metabolism; IMP biosynthesis via de novo pathway; IMP from 5-formamido-1-(5-phospho-D-ribosyl)imidazole-4-carboxamide: step 1/1. This Cupriavidus metallidurans (strain ATCC 43123 / DSM 2839 / NBRC 102507 / CH34) (Ralstonia metallidurans) protein is Bifunctional purine biosynthesis protein PurH.